A 432-amino-acid polypeptide reads, in one-letter code: Enolase (432 aa).

Q163 contributes to the (2R)-2-phosphoglycerate binding site. The Proton donor role is filled by E205. D242, E287, and D314 together coordinate Mg(2+). K339, R368, S369, and K390 together coordinate (2R)-2-phosphoglycerate. K339 acts as the Proton acceptor in catalysis.

Belongs to the enolase family. Requires Mg(2+) as cofactor.

The protein resides in the cytoplasm. Its subcellular location is the secreted. The protein localises to the cell surface. The catalysed reaction is (2R)-2-phosphoglycerate = phosphoenolpyruvate + H2O. Its pathway is carbohydrate degradation; glycolysis; pyruvate from D-glyceraldehyde 3-phosphate: step 4/5. Catalyzes the reversible conversion of 2-phosphoglycerate (2-PG) into phosphoenolpyruvate (PEP). It is essential for the degradation of carbohydrates via glycolysis. In Myxococcus xanthus (strain DK1622), this protein is Enolase.